Here is a 407-residue protein sequence, read N- to C-terminus: Argininosuccinate synthase (407 aa).

ATP-binding positions include 11–19 and Ala-39; that span reads AYSGGLDTS. Tyr-90 and Ser-95 together coordinate L-citrulline. Gly-120 lines the ATP pocket. Positions 122, 126, and 127 each coordinate L-aspartate. Asn-126 is an L-citrulline binding site. L-citrulline-binding residues include Arg-130, Ser-179, Ser-188, Glu-264, and Tyr-276.

The protein belongs to the argininosuccinate synthase family. Type 1 subfamily. Homotetramer.

Its subcellular location is the cytoplasm. It carries out the reaction L-citrulline + L-aspartate + ATP = 2-(N(omega)-L-arginino)succinate + AMP + diphosphate + H(+). The protein operates within amino-acid biosynthesis; L-arginine biosynthesis; L-arginine from L-ornithine and carbamoyl phosphate: step 2/3. In Roseiflexus sp. (strain RS-1), this protein is Argininosuccinate synthase.